A 401-amino-acid polypeptide reads, in one-letter code: Glycerol-1-phosphate dehydrogenase [NAD(P)+] (401 aa).

NAD(+) is bound by residues aspartate 57, 118 to 122 (GTIHD), and 140 to 143 (TAPS). Aspartate 145 provides a ligand contact to substrate. Serine 149 is a binding site for NAD(+). Aspartate 192 is a substrate binding site. Ni(2+) contacts are provided by aspartate 192 and histidine 272. Histidine 276 is a substrate binding site. Residue histidine 292 coordinates Ni(2+).

Belongs to the glycerol-1-phosphate dehydrogenase family. As to quaternary structure, homodimer. The cofactor is Ni(2+).

The protein localises to the cytoplasm. The enzyme catalyses sn-glycerol 1-phosphate + NAD(+) = dihydroxyacetone phosphate + NADH + H(+). It catalyses the reaction sn-glycerol 1-phosphate + NADP(+) = dihydroxyacetone phosphate + NADPH + H(+). In terms of biological role, catalyzes the NAD(P)H-dependent reduction of dihydroxyacetonephosphate (DHAP or glycerone phosphate) to glycerol 1-phosphate (G1P). The G1P thus generated is probably used for the synthesis of phosphoglycerolipids in Gram-positive bacterial species. The sequence is that of Glycerol-1-phosphate dehydrogenase [NAD(P)+] from Bacillus licheniformis (strain ATCC 14580 / DSM 13 / JCM 2505 / CCUG 7422 / NBRC 12200 / NCIMB 9375 / NCTC 10341 / NRRL NRS-1264 / Gibson 46).